Here is an 83-residue protein sequence, read N- to C-terminus: uncharacterized protein (83 aa).

The next 2 membrane-spanning stretches (helical) occupy residues 23–43 and 49–69; these read GGCY…SAIA and SLWW…VVYG.

It is found in the cell membrane. This is an uncharacterized protein from Mycobacterium tuberculosis (strain CDC 1551 / Oshkosh).